We begin with the raw amino-acid sequence, 510 residues long: DNA nucleotidylexotransferase (510 aa).

The Nuclear localization signal motif lies at 11–17 (PRRKQPK). The BRCT domain occupies 27-124 (KYDIKFKDIA…QPVEIERKHR (98 aa)). Residues 254-258 (VGLRT) are involved in DNA binding. A 2'-deoxyribonucleoside 5'-triphosphate-binding positions include 329-334 (GFRRGN) and 338-341 (HDVD). Mg(2+)-binding residues include aspartate 339, aspartate 341, and aspartate 434. 449-450 (GW) lines the a 2'-deoxyribonucleoside 5'-triphosphate pocket.

It belongs to the DNA polymerase type-X family. Requires Mg(2+) as cofactor.

Its subcellular location is the nucleus. The catalysed reaction is DNA(n) + a 2'-deoxyribonucleoside 5'-triphosphate = DNA(n+1) + diphosphate. In terms of biological role, template-independent DNA polymerase which catalyzes the random addition of deoxynucleoside 5'-triphosphate to the 3'-end of a DNA initiator. One of the in vivo functions of this enzyme is the addition of nucleotides at the junction (N region) of rearranged Ig heavy chain and T-cell receptor gene segments during the maturation of B- and T-cells. This Ambystoma mexicanum (Axolotl) protein is DNA nucleotidylexotransferase (DNTT).